A 340-amino-acid polypeptide reads, in one-letter code: DNA-directed RNA polymerase subunit alpha (340 aa).

Residues 1–236 (MLSLSKNWNT…EQLQLFIAFE (236 aa)) are alpha N-terminal domain (alpha-NTD). Residues 251 to 340 (FSPYLLKRVD…LSKRYEDSYN (90 aa)) form an alpha C-terminal domain (alpha-CTD) region.

Belongs to the RNA polymerase alpha chain family. Homodimer. The RNAP catalytic core consists of 2 alpha, 1 beta, 1 beta' and 1 omega subunit. When a sigma factor is associated with the core the holoenzyme is formed, which can initiate transcription.

The enzyme catalyses RNA(n) + a ribonucleoside 5'-triphosphate = RNA(n+1) + diphosphate. Its function is as follows. DNA-dependent RNA polymerase catalyzes the transcription of DNA into RNA using the four ribonucleoside triphosphates as substrates. The protein is DNA-directed RNA polymerase subunit alpha of Rickettsia prowazekii (strain Madrid E).